Consider the following 146-residue polypeptide: Multiple coagulation factor deficiency protein 2 (146 aa).

The N-terminal stretch at 1 to 26 (MTMRSLLRTPFLCGLLWAFCAPGARA) is a signal peptide. The EF-hand 1 domain occupies 68–103 (SPQELQLHYFKMHDYDGNNLLDGLELSTAITHVHKE). The Ca(2+) site is built by D81, D83, N85, and E92. A Phosphoserine modification is found at S106. Residues 116 to 146 (ELINIIDGVLRDDDKNNDGYIDYAEFAKSLQ) form the EF-hand 2 domain. Ca(2+)-binding residues include D129, N131, D133, Y135, and E140.

As to quaternary structure, interacts in a calcium-dependent manner with LMAN1.

Its subcellular location is the endoplasmic reticulum-Golgi intermediate compartment. The protein localises to the endoplasmic reticulum. It localises to the golgi apparatus. Its function is as follows. The MCFD2-LMAN1 complex forms a specific cargo receptor for the ER-to-Golgi transport of selected proteins. Plays a role in the secretion of coagulation factors. This chain is Multiple coagulation factor deficiency protein 2 (MCFD2), found in Homo sapiens (Human).